Reading from the N-terminus, the 407-residue chain is MRGGLWQVGQSITRRLGQSDKKTIVRRWYASEADLKKTVLYDFHVANGGKMVPFAGWSMPIQYKDSIMESTINCRENGSLFDVSHMCGLSLKGKDCVAFLEKLVVADVAGLAPGTGSLTVFTNEKGGAIDDSVITKVTDDHIYLVVNAGCRDKDLAHIEQHMKAFKAKGGDVSWHIHDERSLLALQGPLAGSTLQHLTKDDLSKMYFGDFRIIDISGSKCFLTRTGYTGEDGFEISVPSENAVDLAKAILEKSEGKVRLTGLGARDSLRLEAGLCLYGNDMEQHITPVEAGLTWAIGKRRRAEGGFLGAEVILKQIADGPAIRRVGLFSTGPPARSHSEIQNEQGENIGEVTSGGFSPCLKKNIGMGYVKSGLHKPGTKLKIVIRGKTYEGSVTKMPFVPTKYYKPA.

The N-terminal 29 residues, Met-1 to Tyr-29, are a transit peptide targeting the mitochondrion. Substrate is bound by residues Glu-234, Arg-265, and Tyr-403.

Belongs to the GcvT family. As to quaternary structure, the glycine cleavage system is composed of four proteins: P, T, L and H.

The protein resides in the mitochondrion. It carries out the reaction N(6)-[(R)-S(8)-aminomethyldihydrolipoyl]-L-lysyl-[protein] + (6S)-5,6,7,8-tetrahydrofolate = N(6)-[(R)-dihydrolipoyl]-L-lysyl-[protein] + (6R)-5,10-methylene-5,6,7,8-tetrahydrofolate + NH4(+). In terms of biological role, the glycine cleavage system catalyzes the degradation of glycine. This is Aminomethyltransferase, mitochondrial (GDCST) from Flaveria trinervia (Clustered yellowtops).